The following is a 239-amino-acid chain: Small ribosomal subunit protein uS2 (239 aa).

The protein belongs to the universal ribosomal protein uS2 family.

The protein is Small ribosomal subunit protein uS2 of Histophilus somni (strain 129Pt) (Haemophilus somnus).